The chain runs to 435 residues: Hydrogenobyrinate a,c-diamide synthase (435 aa).

The GATase cobBQ-type domain maps to 239-422 (RIGVARDASF…IHFYLPSNPQ (184 aa)). Catalysis depends on C321, which acts as the Nucleophile.

The protein belongs to the CobB/CbiA family. The cofactor is Mg(2+).

It catalyses the reaction hydrogenobyrinate + 2 L-glutamine + 2 ATP + 2 H2O = hydrogenobyrinate a,c-diamide + 2 L-glutamate + 2 ADP + 2 phosphate + 2 H(+). It participates in cofactor biosynthesis; adenosylcobalamin biosynthesis; cob(II)yrinate a,c-diamide from precorrin-2 (aerobic route): step 9/10. Catalyzes the ATP-dependent amidation of the two carboxylate groups at positions a and c of hydrogenobyrinate, using either L-glutamine or ammonia as the nitrogen source. The polypeptide is Hydrogenobyrinate a,c-diamide synthase (Pseudomonas aeruginosa (strain ATCC 15692 / DSM 22644 / CIP 104116 / JCM 14847 / LMG 12228 / 1C / PRS 101 / PAO1)).